Reading from the N-terminus, the 74-residue chain is Large ribosomal subunit protein uL29 (74 aa).

This sequence belongs to the universal ribosomal protein uL29 family.

The chain is Large ribosomal subunit protein uL29 from Streptomyces avermitilis (strain ATCC 31267 / DSM 46492 / JCM 5070 / NBRC 14893 / NCIMB 12804 / NRRL 8165 / MA-4680).